Consider the following 281-residue polypeptide: 40S small subunit processome assembly factor 1 (281 aa).

The tract at residues 29–141 (LGETEGETEQ…DEDEPAKNKT (113 aa)) is disordered. 2 positions are modified to phosphoserine: Ser67 and Ser75. Lys172 is modified (N6-acetyllysine). The segment at 221 to 254 (ETDIFKKKKKKGRGQEDRRSKKSAPSILSSGQVG) is disordered. Position 267 is a phosphoserine (Ser267).

Part of the small subunit (SSU) processome, composed of more than 70 proteins and the RNA chaperone small nucleolar RNA (snoRNA) U3.

It is found in the chromosome. The protein localises to the nucleus. Its subcellular location is the nucleolus. Its function is as follows. Part of the small subunit (SSU) processome, first precursor of the small eukaryotic ribosomal subunit. During the assembly of the SSU processome in the nucleolus, many ribosome biogenesis factors, an RNA chaperone and ribosomal proteins associate with the nascent pre-rRNA and work in concert to generate RNA folding, modifications, rearrangements and cleavage as well as targeted degradation of pre-ribosomal RNA by the RNA exosome. Prevents helicase DHX37 to be recruited before post-A1 state. The sequence is that of 40S small subunit processome assembly factor 1 from Mus musculus (Mouse).